Consider the following 277-residue polypeptide: Kallikrein-13 (277 aa).

An N-terminal signal peptide occupies residues 1 to 16 (MWPLALVIASLTLALS). Asn-30 is a glycosylation site (N-linked (GlcNAc...) asparagine). One can recognise a Peptidase S1 domain in the interval 36 to 263 (LPGGYTCFPH…YVLWIRETIR (228 aa)). Disulfide bonds link Cys-42–Cys-178, Cys-61–Cys-77, Cys-157–Cys-224, Cys-189–Cys-203, and Cys-214–Cys-239. Active-site charge relay system residues include His-76 and Asp-124. Residue Ser-218 is the Charge relay system of the active site. Asn-225 is a glycosylation site (N-linked (GlcNAc...) asparagine).

The protein belongs to the peptidase S1 family. Kallikrein subfamily. Expressed in prostate, breast, testis and salivary gland.

Its subcellular location is the secreted. The sequence is that of Kallikrein-13 (KLK13) from Homo sapiens (Human).